Here is a 359-residue protein sequence, read N- to C-terminus: E3 ubiquitin-protein ligase RNF146 (359 aa).

The RING-type zinc finger occupies 37-75 (CAICLQTCVHPVSLPCKHVFCYLCVKGASWLGKRCALCR). Residues Lys85 and Lys95 each participate in a glycyl lysine isopeptide (Lys-Gly) (interchain with G-Cter in ubiquitin) cross-link. Positions 92-168 (EELKAASRGN…EHGRRRKIKR (77 aa)) constitute a WWE domain. 3 residues coordinate a glycoprotein: Tyr108, Arg111, and Trp115. A Glycyl lysine isopeptide (Lys-Gly) (interchain with G-Cter in ubiquitin) cross-link involves residue Lys131. Residues Tyr145, Gln154, Arg164, and Lys176 each contribute to the a glycoprotein site. Lys176 is covalently cross-linked (Glycyl lysine isopeptide (Lys-Gly) (interchain with G-Cter in ubiquitin)). The segment at 254-359 (GDNTAERSHR…PDGQCTVTEV (106 aa)) is disordered. Residues 284-298 (SIEETESDASSDSED) are compositionally biased toward acidic residues. 2 positions are modified to phosphoserine: Ser290 and Ser294. Positions 306–323 (HSLTQQRLLVSNANQTVP) are enriched in polar residues.

As to quaternary structure, can form homooligomers. Interacts with PARsylated AXIN1, AXIN2, BLZF1, CASC3, H1-2, IPO7, LIG3, NCL, PARP1, XRCC1, XRCC5 and XRCC6. Interacts with DDB1, DHX15, IQGAP1, LRPPRC, PARP2, PRKDC, RUVBL2, TNKS1 and TNKS2. Binding often leads to interactor ubiquitination, in the presence of the appropriate E1 and E2 enzymes, and proteasomal degradation. Post-translationally, ubiquitinated; autoubiquitinated. Polyubiquitinated in the presence of UBE2D1, UBE2D2 and UBE2D3. Multimonoubiquitinated in the presence of UBE2E1. Not ubiquitinated in the presence of UBE2H, CDC34, UBE2L3, UBE2L6, nor UBE2C. In the absence of PAR, autoubiquitination occurs on Lys-85, Lys-95 and Lys-176 via 'Lys-11' and 'Lys-48' ubiquitin linkages. In the presence of PAR, Lys-131 and Lys-176 are ubiquitinated via 'Lys-6', 'Lys-33' and 'Lys-48' ubiquitin linkages. Autoubiquitination is enhanced upon PAR-binding. As to expression, ubiquitously expressed. Up-regulated in brains from patients with Alzheimer disease.

It is found in the cytoplasm. The protein localises to the cytosol. Its subcellular location is the nucleus. The enzyme catalyses S-ubiquitinyl-[E2 ubiquitin-conjugating enzyme]-L-cysteine + [acceptor protein]-L-lysine = [E2 ubiquitin-conjugating enzyme]-L-cysteine + N(6)-ubiquitinyl-[acceptor protein]-L-lysine.. Its pathway is protein modification; protein ubiquitination. Functionally, E3 ubiquitin-protein ligase that specifically binds poly-ADP-ribosylated (PARsylated) proteins and mediates their ubiquitination and subsequent degradation. May regulate many important biological processes, such as cell survival and DNA damage response. Acts as an activator of the Wnt signaling pathway by mediating the ubiquitination of PARsylated AXIN1 and AXIN2, 2 key components of the beta-catenin destruction complex. Acts in cooperation with tankyrase proteins (TNKS and TNKS2), which mediate PARsylation of target proteins AXIN1, AXIN2, BLZF1, CASC3, TNKS and TNKS2. Recognizes and binds tankyrase-dependent PARsylated proteins via its WWE domain and mediates their ubiquitination, leading to their degradation. Different ubiquitin linkage types have been observed: TNKS2 undergoes ubiquitination at 'Lys-48' and 'Lys-63', while AXIN1 is only ubiquitinated at 'Lys-48'. May regulate TNKS and TNKS2 subcellular location, preventing aggregation at a centrosomal location. Neuroprotective protein. Protects the brain against N-methyl-D-aspartate (NMDA) receptor-mediated glutamate excitotoxicity and ischemia, by interfering with PAR-induced cell death, called parthanatos. Prevents nuclear translocation of AIFM1 in a PAR-binding dependent manner. Does not affect PARP1 activation. Protects against cell death induced by DNA damaging agents, such as N-methyl-N-nitro-N-nitrosoguanidine (MNNG) and rescues cells from G1 arrest. Promotes cell survival after gamma-irradiation. Facilitates DNA repair. The polypeptide is E3 ubiquitin-protein ligase RNF146 (RNF146) (Homo sapiens (Human)).